The following is a 199-amino-acid chain: Translation machinery-associated protein 22 (199 aa).

The SUI1 domain maps to 97–168 (VVIRREARTK…EVEAYIHALL (72 aa)).

This sequence belongs to the DENR family. As to quaternary structure, interacts with the 40S ribosomal subunit.

Its subcellular location is the cytoplasm. In Eremothecium gossypii (strain ATCC 10895 / CBS 109.51 / FGSC 9923 / NRRL Y-1056) (Yeast), this protein is Translation machinery-associated protein 22 (TMA22).